The chain runs to 84 residues: Small ribosomal subunit protein uS17 (84 aa).

It belongs to the universal ribosomal protein uS17 family. In terms of assembly, part of the 30S ribosomal subunit.

Functionally, one of the primary rRNA binding proteins, it binds specifically to the 5'-end of 16S ribosomal RNA. This chain is Small ribosomal subunit protein uS17, found in Clostridium kluyveri (strain NBRC 12016).